A 208-amino-acid chain; its full sequence is MLEAKELTCARDERVLFSQLSFTVGAGNIVQIEGPNGAGKTSLLRILAGLSRPESGEILWNQTAVGRQRDIWQREMLYLGHLPGVKGVLSPLENLRFFHPDCSDEQIFDALDEVDLTGYEDAIVAQLSAGQQRRVALARLWLSQARLWILDEPLTAIDKAGVEKIMSQFASHAGRGGSVILTTHQDLPDQQDVVRKIRLTAEGRDECW.

Residues 2 to 206 form the ABC transporter domain; it reads LEAKELTCAR…IRLTAEGRDE (205 aa). 34-41 is a binding site for ATP; that stretch reads GPNGAGKT.

Belongs to the ABC transporter superfamily. CcmA exporter (TC 3.A.1.107) family. As to quaternary structure, the complex is composed of two ATP-binding proteins (CcmA) and two transmembrane proteins (CcmB).

Its subcellular location is the cell inner membrane. The enzyme catalyses heme b(in) + ATP + H2O = heme b(out) + ADP + phosphate + H(+). Its function is as follows. Part of the ABC transporter complex CcmAB involved in the biogenesis of c-type cytochromes; once thought to export heme, this seems not to be the case, but its exact role is uncertain. Responsible for energy coupling to the transport system. The protein is Cytochrome c biogenesis ATP-binding export protein CcmA of Tatumella citrea (Pantoea citrea).